The following is a 531-amino-acid chain: Acyl-CoA ligase azaF (531 aa).

An AMP-binding site is contributed by 188-199 (RLFSSGTTGLPK). The AMP-binding stretch occupies residues 449-525 (EVEGVLRNHP…DAIPRNASGK (77 aa)).

It belongs to the ATP-dependent AMP-binding enzyme family.

The protein operates within secondary metabolite biosynthesis. Acyl-CoA ligase; part of the gene cluster that mediates the biosynthesis of azaphilones, a class of fungal metabolites characterized by a highly oxygenated pyrano-quinone bicyclic core and exhibiting a broad range of bioactivities. In the first step, the non-reducing polyketide synthase azaA forms the hexaketide precursor from successive condensations of five malonyl-CoA units, presumably with a simple acetyl-CoA starter unit. The reactive polyketide chain then undergoes a PT-mediated C2-C7 cyclization to afford the aromatic ring and is eventually released as an aldehyde through the R-domain. The putative ketoreductase azaE is proposed to catalyze the reduction of the terminal ketone resulting in the early culture product FK17-P2a. The monooxygenase azaH was demonstrated to be the only enzyme required to convert FK17-P2a to azanigerone E. AzaH first hydroxylates the benzaldehyde intermediate FK17-P2a at C4, which triggers the formation of the pyran-ring to afford azanigerone E. In parallel, the 2,4-dimethylhexanoyl chain is synthesized by the HR-PKS azaB and is proposed to be transferred to the C4-hydroxyl of azanigerone E by the acyltransferase azaD directly from the ACP domain of azaB. Alternatively, the 2,4-dimethyl-hexanoyl chain may be offloaded from the HR-PKS as a carboxylic acid and converted to an acyl-CoA by azaF. The resulting acyl-CoA molecule could then be taken up as a substrate by AzaD to form azanigerone B. To yield the carboxylic acid substituent in azanigerone A, the hydroxypropyl side chain of azanigerone B would need to undergo a C-C oxidative cleavage catalyzed by cytochrome P450 AzaI. AzaI is proposed to act on a vicinal diol that leads to a C-C bond scission either through an alkoxyradical intermediate or a peroxy complex. In the biosynthesis of azanigerone A, azanigerone B first undergoes hydroxylation at C10, possibly catalyzed by one of the two FAD-dependent monooxygenases encoded in the cluster, azaG or azaL, resulting in the vicinal diol azanigerone C. Oxidative cleavage of azanigerone C by azaI would yield the corresponding aldehyde derivative of azanigerone A. Finally, the dehydrogenase azaJ is proposed to convert the aldehyde functional group into the carboxylic acid, completing the conversion from azanigerone B to azanigerone A. Alternatively, the oxidation of aldehyde to carboxylic acid may be catalyzed by the same P450 enzyme azaI via consecutive oxidation or by endogenous alcohol dehydrogenase. The protein is Acyl-CoA ligase azaF of Aspergillus niger (strain ATCC 1015 / CBS 113.46 / FGSC A1144 / LSHB Ac4 / NCTC 3858a / NRRL 328 / USDA 3528.7).